The sequence spans 212 residues: Adenylate kinase (212 aa).

10–15 provides a ligand contact to ATP; the sequence is GAGKGT. Residues 30 to 59 form an NMP region; that stretch reads STGDMFRAAIANQTEMGVLAKSYIDKGELV. AMP contacts are provided by residues threonine 31, arginine 36, 57–59, 86–89, and glutamine 93; these read ELV and GYPR. The interval 127 to 159 is LID; the sequence is GRIIHRETGETFHKVFNPPADYKEEDYYQREDD. Residues arginine 128 and 137–138 each bind ATP; that span reads TF. The AMP site is built by arginine 156 and arginine 167. Position 195 (glutamine 195) interacts with ATP.

This sequence belongs to the adenylate kinase family. Monomer.

The protein resides in the cytoplasm. The enzyme catalyses AMP + ATP = 2 ADP. Its pathway is purine metabolism; AMP biosynthesis via salvage pathway; AMP from ADP: step 1/1. Functionally, catalyzes the reversible transfer of the terminal phosphate group between ATP and AMP. Plays an important role in cellular energy homeostasis and in adenine nucleotide metabolism. The polypeptide is Adenylate kinase (Streptococcus sanguinis (strain SK36)).